The chain runs to 805 residues: Leucine--tRNA ligase (805 aa).

Residues proline 40–histidine 51 carry the 'HIGH' region motif. The 'KMSKS' region motif lies at lysine 576–serine 580. Lysine 579 is an ATP binding site.

The protein belongs to the class-I aminoacyl-tRNA synthetase family.

It is found in the cytoplasm. It catalyses the reaction tRNA(Leu) + L-leucine + ATP = L-leucyl-tRNA(Leu) + AMP + diphosphate. This chain is Leucine--tRNA ligase, found in Chlorobium limicola (strain DSM 245 / NBRC 103803 / 6330).